We begin with the raw amino-acid sequence, 372 residues long: Inner membrane protein YbiR (372 aa).

Topologically, residues 1–13 (MSLPFLRTLQGDR) are periplasmic. A run of 2 helical transmembrane segments spans residues 14-34 (FFQL…FAPK) and 35-55 (SWPA…MLLT). Residues 56–85 (KGVELSGYFDVLGRKMVRRFATERRLAMFM) are Periplasmic-facing. The helical transmembrane segment at 86 to 106 (VLAAALLSTFLTNDVALFIVV) threads the bilayer. At 107 to 122 (PLTITLKRLCEIPVNR) the chain is on the cytoplasmic side. The chain crosses the membrane as a helical span at residues 123 to 143 (LIIFEALAVNAGSLLTPIGNP). Topologically, residues 144 to 155 (QNILIWGRSGLS) are periplasmic. A helical membrane pass occupies residues 156–176 (FAGFIAQMAPLAGAMMLTLLL). The Cytoplasmic portion of the chain corresponds to 177 to 208 (LCWCCFPGKAMQYHTGVQTPEWKPRLVWSCLG). Residues 209–229 (LYIVFLTALEFKQELWGLVIV) traverse the membrane as a helical segment. Topologically, residues 230-247 (AAGFALLARRVVLSVDWT) are periplasmic. The helical transmembrane segment at 248–268 (LLLVFMAMFIDVHLLTQLPAL) threads the bilayer. The Cytoplasmic segment spans residues 269–283 (QGVLGNVSHLSEPGL). Residues 284–304 (WLTAIGLSQVISNVPSTILLL) traverse the membrane as a helical segment. At 305–309 (NYVPP) the chain is on the periplasmic side. A helical transmembrane segment spans residues 310–330 (SLLLVWAVNVGGFGLLPGSLA). Topologically, residues 331-348 (NLIALRMANDRRIWWRFH) are cytoplasmic. A helical transmembrane segment spans residues 349–369 (LYSIPMLLWAALVGYVLLVIL). Topologically, residues 370 to 372 (PAN) are periplasmic.

It belongs to the CitM (TC 2.A.11) transporter family.

It localises to the cell inner membrane. The polypeptide is Inner membrane protein YbiR (ybiR) (Escherichia coli (strain K12)).